The primary structure comprises 108 residues: Alkyltransferase-like protein 1 (108 aa).

This sequence belongs to the MGMT family. ATL subfamily.

Functionally, involved in DNA damage recognition. Binds DNA containing O(6)-methylguanine and larger O(6)-alkylguanine adducts. The DNA is bent, the damaged base is rotated out of the DNA duplex into a hydrophobic binding pocket (nucleotide flipping), with Arg-39 donating a hydrogen bond to the orphaned cytosine to stabilize the extrahelical DNA conformation. This structural change in DNA presents the lesion to the nucleotide excision repair (NER) pathway. The affinity for O(6)-alkylguanine adducts increases with the size of the alkyl group. Low affinity small O(6)-alkylguanines are directed to the global genome repair pathway of NER via rhp7-rhp16 and rhp41-rhp23, while strong binding to bulky O(6)-alkylguanines stalls the transcription machinery and diverts the damage to the transcription-coupled repair pathway of NER via rhp26. In Schizosaccharomyces pombe (strain 972 / ATCC 24843) (Fission yeast), this protein is Alkyltransferase-like protein 1.